A 470-amino-acid polypeptide reads, in one-letter code: Transcription factor SOX-8 (470 aa).

The segment covering 1–12 (MLNMTEEHDKAL) has biased composition (basic and acidic residues). The interval 1–60 (MLNMTEEHDKALEAPCSPAGTTSSMSHVDSDSDSPLSPAGSEGLGCAPAPAPRPPGAAPL) is disordered. The dimerization (DIM) stretch occupies residues 67–107 (AEVDERFPACIRDAVSQVLKGYDWSLVPMPVRGNGSLKAKP). The HMG box DNA-binding region spans 109–177 (VKRPMNAFMV…QHKKDHPDYK (69 aa)). 3 stretches are compositionally biased toward basic and acidic residues: residues 163 to 178 (ERLR…DYKY), 219 to 228 (DGHHHGEHAG), and 242 to 257 (TDLH…HEGR). Disordered stretches follow at residues 163–257 (ERLR…HEGR) and 327–381 (AGGA…DYGS). A transactivation domain (TAM) region spans residues 233–308 (PPTPPTTPKT…LNGHTAMPAD (76 aa)). The span at 338-349 (SPASASPSSADS) shows a compositional bias: low complexity. The interval 353 to 470 (RPHIKTEQLS…QPVYTTLTRP (118 aa)) is transactivation domain (TAC). Polar residues predominate over residues 359-372 (EQLSPSHYSDQSHG). A 9aaTAD motif is present at residues 424–432 (SSIYQYPYF).

In terms of tissue distribution, widely expressed in the embryo.

Its subcellular location is the nucleus. Functionally, transcription factor that may play a role in central nervous system, limb and facial development. May be involved in male sex determination. Binds the consensus motif 5'-[AT][AT]CAA[AT]G-3'. This Gallus gallus (Chicken) protein is Transcription factor SOX-8 (SOX8).